The primary structure comprises 287 residues: Small ribosomal subunit protein uS2 (287 aa).

The disordered stretch occupies residues 235–287 (ESGFATGGGDWEATAPAAASGWDDAAAQPQNWDSAAQGAASWDEAAAPKEGQW). Positions 247–261 (ATAPAAASGWDDAAA) are enriched in low complexity.

Belongs to the universal ribosomal protein uS2 family. Component of the small ribosomal subunit. Mature ribosomes consist of a small (40S) and a large (60S) subunit. The 40S subunit contains about 33 different proteins and 1 molecule of RNA (18S). The 60S subunit contains about 49 different proteins and 3 molecules of RNA (25S, 5.8S and 5S). Interacts with RPS21.

It is found in the cytoplasm. Functionally, required for the assembly and/or stability of the 40S ribosomal subunit. Required for the processing of the 20S rRNA-precursor to mature 18S rRNA in a late step of the maturation of 40S ribosomal subunits. The polypeptide is Small ribosomal subunit protein uS2 (Pyricularia oryzae (strain 70-15 / ATCC MYA-4617 / FGSC 8958) (Rice blast fungus)).